Reading from the N-terminus, the 111-residue chain is Prothymosin alpha-A (111 aa).

The segment at 1-111 is disordered; sequence MSDTAVDASV…IKKQKTDEDD (111 aa). The segment covering 9 to 42 has biased composition (basic and acidic residues); that stretch reads SVEKTTKDLKAKEKEVVEEAENGKDKPTNGKAEN. 2 stretches are compositionally biased toward acidic residues: residues 43-81 and 90-100; these read EENG…DEVE and EDDEDDDDDDV. Positions 101–111 are enriched in basic and acidic residues; sequence EIKKQKTDEDD.

Belongs to the pro/parathymosin family.

It is found in the nucleus. The chain is Prothymosin alpha-A (ptma-a) from Xenopus laevis (African clawed frog).